Reading from the N-terminus, the 194-residue chain is MPSLLLWTGLGNPEPGMALQRHNIGFMAVDAIAQRHGFTPWRNRFKGLTAEGTLAGRKIILLKPMTYMNASGESVQPATAFFKLPPEAVSAFHDELDLAPGKVRVKRGGGAAGHNGLRSMDRMLGTPEYWRVRLGIGHPGSKERVHGHVLGNFAKSDQEWLGPLLEAVADAAPLLAEGRAEDFMTRIALLTHRQ.

H22 serves as the catalytic Proton acceptor. TRNA contacts are provided by Y67, N69, and N115.

Belongs to the PTH family. Monomer.

It localises to the cytoplasm. It carries out the reaction an N-acyl-L-alpha-aminoacyl-tRNA + H2O = an N-acyl-L-amino acid + a tRNA + H(+). Its function is as follows. Hydrolyzes ribosome-free peptidyl-tRNAs (with 1 or more amino acids incorporated), which drop off the ribosome during protein synthesis, or as a result of ribosome stalling. Catalyzes the release of premature peptidyl moieties from peptidyl-tRNA molecules trapped in stalled 50S ribosomal subunits, and thus maintains levels of free tRNAs and 50S ribosomes. The sequence is that of Peptidyl-tRNA hydrolase from Granulibacter bethesdensis (strain ATCC BAA-1260 / CGDNIH1).